The following is a 769-amino-acid chain: Protein transport protein sec39 (769 aa).

The protein belongs to the SEC39 family. Component of a peripheral membrane protein complex consisting of dsl1, sec39 and tip20.

It localises to the endoplasmic reticulum membrane. Required for protein transport between the Golgi and the endoplasmic reticulum. May contribute to tethering of coatomer-coated retrograde transport vesicles to the ER membrane through interaction with and stabilization of the SNARE complex. The polypeptide is Protein transport protein sec39 (Schizosaccharomyces pombe (strain 972 / ATCC 24843) (Fission yeast)).